The sequence spans 1002 residues: Eukaryotic translation initiation factor 5B (1002 aa).

2 disordered regions span residues 1–172 and 184–402; these read MAKK…GLAA and EEQE…NKKD. The span at 13-23 shows a compositional bias: acidic residues; it reads WDEEFEEDAAQ. The segment covering 27 to 37 has biased composition (polar residues); it reads ISATPTPNPES. Low complexity predominate over residues 47–57; the sequence is EASASAEGAEA. 2 stretches are compositionally biased toward basic and acidic residues: residues 75–111 and 120–154; these read KKVI…EQAA and QKEK…ESDK. Residues 155–172 show a composition bias toward low complexity; the sequence is PSASAKKPAKKVPAGLAA. 2 stretches are compositionally biased toward basic and acidic residues: residues 184–252 and 267–276; these read EEQE…ERRR and AKKDGEENKP. The segment covering 277-287 has biased composition (basic residues); sequence KKVVYSKKKKR. Residues 297 to 306 show a composition bias toward basic and acidic residues; the sequence is IKSDSKKDSE. Composition is skewed to acidic residues over residues 307–342 and 352–370; these read VVPD…EETQ and DQNQ…EEEE. The segment covering 381–398 has biased composition (low complexity); it reads STPAATPAATPTPSSASP. One can recognise a tr-type G domain in the interval 403–621; that stretch reads LRSPICCILG…LLELTQKRMS (219 aa). Serine 405 carries the post-translational modification Phosphoserine. Positions 412-419 are G1; that stretch reads GHVDTGKT. Aspartate 415 provides a ligand contact to K(+). Residue aspartate 415 coordinates Na(+). Residues 415-420, glutamine 431, and 437-439 contribute to the GTP site; these read DTGKTK and GIT. Residue threonine 419 coordinates Mg(2+). Glycine 437 serves as a coordination point for K(+). Glycine 437 provides a ligand contact to Na(+). Residues 437–441 are G2; the sequence is GITQQ. Threonine 439 is a binding site for Mg(2+). Residues 476–479 are G3; that stretch reads DTPG. GTP is bound by residues 530–533 and 599–600; these read NKID and AV. Positions 530 to 533 are G4; it reads NKID. The tract at residues 598–600 is G5; it reads SAV.

It belongs to the TRAFAC class translation factor GTPase superfamily. Classic translation factor GTPase family. IF-2 subfamily. It depends on Na(+) as a cofactor. K(+) serves as cofactor.

It localises to the cytoplasm. It catalyses the reaction GTP + H2O = GDP + phosphate + H(+). Its function is as follows. Plays a role in translation initiation. Translational GTPase that catalyzes the joining of the 40S and 60S subunits to form the 80S initiation complex with the initiator methionine-tRNA in the P-site base paired to the start codon. GTP binding and hydrolysis induces conformational changes in the enzyme that renders it active for productive interactions with the ribosome. The release of the enzyme after formation of the initiation complex is a prerequisite to form elongation-competent ribosomes. Stimulates 20S pre-rRNA cleavage to mature 18S rRNA by PIN-domain endonuclease NOB1. The polypeptide is Eukaryotic translation initiation factor 5B (Saccharomyces cerevisiae (strain ATCC 204508 / S288c) (Baker's yeast)).